A 137-amino-acid chain; its full sequence is Large ribosomal subunit protein uL16 (137 aa).

This sequence belongs to the universal ribosomal protein uL16 family. In terms of assembly, part of the 50S ribosomal subunit.

Binds 23S rRNA and is also seen to make contacts with the A and possibly P site tRNAs. The protein is Large ribosomal subunit protein uL16 of Rhizobium meliloti (strain 1021) (Ensifer meliloti).